The sequence spans 1816 residues: Kinesin-like protein KIF1B (1816 aa).

Ser2 is subject to N-acetylserine. Residues 5-354 (SVKVAVRVRP…LRYADRAKQI (350 aa)) enclose the Kinesin motor domain. 97 to 104 (GQTGAGKS) contacts ATP. The interval 270–350 (NINKSLTTLG…TLSTLRYADR (81 aa)) is interaction with KIFBP. Coiled coils occupy residues 365-386 (NAKL…LRAQ) and 470-502 (GEEA…EAIR). The region spanning 556–612 (TRVGQADAERRQDIVLSGAHIKEEHCLFRSERSNTGEVIVTLEPCERSETYVNGKRV) is the FHA domain. Residues Thr647 and Thr652 each carry the phosphothreonine modification. Coiled-coil stretches lie at residues 668 to 737 (EKQG…EEEV) and 841 to 869 (SLDK…AQDD). Ser1054, Ser1057, Ser1416, Ser1454, and Ser1487 each carry phosphoserine. A disordered region spans residues 1522-1571 (VPKSLSDSLSPSLSSGTLSTSTSISSQISTTTFESAITPSESSGYDSADV). The segment covering 1525 to 1553 (SLSDSLSPSLSSGTLSTSTSISSQISTTT) has biased composition (low complexity). A compositionally biased stretch (polar residues) spans 1554–1566 (FESAITPSESSGY). 4 positions are modified to phosphoserine: Ser1573, Ser1603, Ser1610, and Ser1613. Positions 1620–1637 (SVSSFSSSTLTPSSTCPS) are enriched in low complexity. The disordered stretch occupies residues 1620-1659 (SVSSFSSSTLTPSSTCPSLVDSRSSSMDQKTPEANSRASS). Positions 1640-1659 (DSRSSSMDQKTPEANSRASS) are enriched in polar residues. A PH domain is found at 1702–1799 (VSKKGYLHFK…WLYAFNPLLA (98 aa)).

It belongs to the TRAFAC class myosin-kinesin ATPase superfamily. Kinesin family. Unc-104 subfamily. In terms of assembly, monomer. Interacts with KIFBP; positively regulates KIF1B microtubule motor activity. Interacts (via C-terminus end of the kinesin-motor domain) with CHP1; the interaction occurs in a calcium-dependent manner. As to quaternary structure, interacts with MADD (via death domain); links this isoform to Rab3-carrying vesicles in anterograde synaptic vesicle transport. Expressed in the brain (at protein level).

Its subcellular location is the cytoplasm. The protein localises to the cytoskeleton. The protein resides in the cytoplasmic vesicle. It is found in the secretory vesicle. It localises to the synaptic vesicle membrane. Its subcellular location is the mitochondrion. The catalysed reaction is ATP + H2O + a kinesin associated with a microtubule at position (n) = ADP + phosphate a kinesin associated with a microtubule at position (n+1, toward the plus end).. Its function is as follows. Has a plus-end-directed microtubule motor activity and functions as a motor for transport of vesicles and organelles along microtubules. Functionally, has a plus-end-directed microtubule motor activity and functions as a motor for anterograde synaptic vesicle transport along axonal microtubules from the cell body to the presynapse in neuronal cells. Functions as a downstream effector in a developmental apoptotic pathway that is activated when nerve growth factor (NGF) becomes limiting for neuronal progenitor cells. In terms of biological role, has a plus-end-directed microtubule motor activity and functions as a motor for anterograde transport of mitochondria. This is Kinesin-like protein KIF1B from Mus musculus (Mouse).